A 306-amino-acid chain; its full sequence is 4-diphosphocytidyl-2-C-methyl-D-erythritol kinase (306 aa).

Residue Lys-23 is part of the active site. 108-118 is a binding site for ATP; the sequence is PIAAGIGGGSA. The active site involves Asp-150.

Belongs to the GHMP kinase family. IspE subfamily.

The enzyme catalyses 4-CDP-2-C-methyl-D-erythritol + ATP = 4-CDP-2-C-methyl-D-erythritol 2-phosphate + ADP + H(+). The protein operates within isoprenoid biosynthesis; isopentenyl diphosphate biosynthesis via DXP pathway; isopentenyl diphosphate from 1-deoxy-D-xylulose 5-phosphate: step 3/6. In terms of biological role, catalyzes the phosphorylation of the position 2 hydroxy group of 4-diphosphocytidyl-2C-methyl-D-erythritol. In Rhodopseudomonas palustris (strain BisB18), this protein is 4-diphosphocytidyl-2-C-methyl-D-erythritol kinase.